Here is a 72-residue protein sequence, read N- to C-terminus: UPF0352 protein SO_2176 (72 aa).

Belongs to the UPF0352 family.

The polypeptide is UPF0352 protein SO_2176 (Shewanella oneidensis (strain ATCC 700550 / JCM 31522 / CIP 106686 / LMG 19005 / NCIMB 14063 / MR-1)).